A 143-amino-acid polypeptide reads, in one-letter code: Large ribosomal subunit protein uL11 (143 aa).

This sequence belongs to the universal ribosomal protein uL11 family. As to quaternary structure, part of the ribosomal stalk of the 50S ribosomal subunit. Interacts with L10 and the large rRNA to form the base of the stalk. L10 forms an elongated spine to which L12 dimers bind in a sequential fashion forming a multimeric L10(L12)X complex. Post-translationally, one or more lysine residues are methylated.

Its function is as follows. Forms part of the ribosomal stalk which helps the ribosome interact with GTP-bound translation factors. In Cupriavidus metallidurans (strain ATCC 43123 / DSM 2839 / NBRC 102507 / CH34) (Ralstonia metallidurans), this protein is Large ribosomal subunit protein uL11.